The following is a 689-amino-acid chain: Elongation factor G 1 (689 aa).

Residues 7–282 enclose the tr-type G domain; that stretch reads DQVRTIGIIS…AVVDFLPSPL (276 aa). Residues 16 to 23, 80 to 84, and 134 to 137 each bind GTP; these read SHIDAGKT, DTPGH, and NKMD.

Belongs to the TRAFAC class translation factor GTPase superfamily. Classic translation factor GTPase family. EF-G/EF-2 subfamily.

The protein localises to the cytoplasm. Its function is as follows. Catalyzes the GTP-dependent ribosomal translocation step during translation elongation. During this step, the ribosome changes from the pre-translocational (PRE) to the post-translocational (POST) state as the newly formed A-site-bound peptidyl-tRNA and P-site-bound deacylated tRNA move to the P and E sites, respectively. Catalyzes the coordinated movement of the two tRNA molecules, the mRNA and conformational changes in the ribosome. This Geobacter sulfurreducens (strain ATCC 51573 / DSM 12127 / PCA) protein is Elongation factor G 1.